A 154-amino-acid chain; its full sequence is Ribosomal RNA large subunit methyltransferase H (154 aa).

Position 102 (Gly102) interacts with S-adenosyl-L-methionine.

This sequence belongs to the RNA methyltransferase RlmH family. As to quaternary structure, homodimer.

It is found in the cytoplasm. The catalysed reaction is pseudouridine(1915) in 23S rRNA + S-adenosyl-L-methionine = N(3)-methylpseudouridine(1915) in 23S rRNA + S-adenosyl-L-homocysteine + H(+). Its function is as follows. Specifically methylates the pseudouridine at position 1915 (m3Psi1915) in 23S rRNA. The polypeptide is Ribosomal RNA large subunit methyltransferase H (Phenylobacterium zucineum (strain HLK1)).